Here is a 325-residue protein sequence, read N- to C-terminus: Putative gluconeogenesis factor (325 aa).

It belongs to the gluconeogenesis factor family.

It localises to the cytoplasm. Its function is as follows. Required for morphogenesis under gluconeogenic growth conditions. In Streptococcus pneumoniae serotype 4 (strain ATCC BAA-334 / TIGR4), this protein is Putative gluconeogenesis factor.